The chain runs to 338 residues: Pyridoxal 5'-phosphate synthase subunit PdxS (338 aa).

D66 is a D-ribose 5-phosphate binding site. Residue K123 is the Schiff-base intermediate with D-ribose 5-phosphate of the active site. G195 contacts D-ribose 5-phosphate. A D-glyceraldehyde 3-phosphate-binding site is contributed by K207. Residues G256 and 277-278 (GS) each bind D-ribose 5-phosphate.

The protein belongs to the PdxS/SNZ family. In terms of assembly, in the presence of PdxT, forms a dodecamer of heterodimers.

The enzyme catalyses aldehydo-D-ribose 5-phosphate + D-glyceraldehyde 3-phosphate + L-glutamine = pyridoxal 5'-phosphate + L-glutamate + phosphate + 3 H2O + H(+). The protein operates within cofactor biosynthesis; pyridoxal 5'-phosphate biosynthesis. In terms of biological role, catalyzes the formation of pyridoxal 5'-phosphate from ribose 5-phosphate (RBP), glyceraldehyde 3-phosphate (G3P) and ammonia. The ammonia is provided by the PdxT subunit. Can also use ribulose 5-phosphate and dihydroxyacetone phosphate as substrates, resulting from enzyme-catalyzed isomerization of RBP and G3P, respectively. The chain is Pyridoxal 5'-phosphate synthase subunit PdxS from Saccharolobus islandicus (strain Y.N.15.51 / Yellowstone #2) (Sulfolobus islandicus).